The chain runs to 368 residues: L-lactate oxidase (368 aa).

In terms of domain architecture, FMN hydroxy acid dehydrogenase spans 13 to 368 (VNAIDVLDLA…KQMKVKTTFA (356 aa)). Tyr39 serves as a coordination point for pyruvate. FMN-binding positions include 92 to 94 (PIA), Ser121, and Gln143. A pyruvate-binding site is contributed by Tyr145. Thr171 contributes to the FMN binding site. Pyruvate is bound at residue Arg180. FMN-binding residues include Lys239 and Ser261. 2 residues coordinate pyruvate: His263 and Arg266. The active-site Proton acceptor is the His263. Residues 294–298 (DGGVQ) and Arg318 contribute to the FMN site.

The protein belongs to the FMN-dependent alpha-hydroxy acid dehydrogenase family. As to quaternary structure, homotetramer. FMN serves as cofactor.

The enzyme catalyses (S)-lactate + O2 = pyruvate + H2O2. It carries out the reaction 2-hydroxyoctanoate + O2 = 2-oxooctanoate + H2O2. Catalyzes the oxidation of (S)-lactate (L-lactate) to pyruvate, with a reduction of O2 to H2O2. To a lesser extent is also able to use 2-hydroxyoctanoate as substrate. May be involved in the utilization of L-lactate as an energy source for growth. The chain is L-lactate oxidase from Lacticaseibacillus rhamnosus (strain LMS2-1).